A 510-amino-acid chain; its full sequence is NAD(P)H-quinone oxidoreductase subunit 2, chloroplastic (510 aa).

12 consecutive transmembrane segments (helical) span residues 24 to 44, 59 to 79, 99 to 119, 124 to 144, 149 to 169, 183 to 203, 229 to 249, 295 to 315, 323 to 343, 347 to 367, 395 to 415, and 418 to 438; these read LLLF…GLIL, WFYF…LFRW, IFQF…VEYI, MAIT…MFLC, LITI…LSGY, YLLM…WLYG, ISIA…PAPF, WHLL…LIAI, MLAY…IVGD, GYAS…GTFA, ALSS…AGFF, and LHLF…IGLL.

The protein belongs to the complex I subunit 2 family. NDH is composed of at least 16 different subunits, 5 of which are encoded in the nucleus.

It localises to the plastid. It is found in the chloroplast thylakoid membrane. The catalysed reaction is a plastoquinone + NADH + (n+1) H(+)(in) = a plastoquinol + NAD(+) + n H(+)(out). It catalyses the reaction a plastoquinone + NADPH + (n+1) H(+)(in) = a plastoquinol + NADP(+) + n H(+)(out). Its function is as follows. NDH shuttles electrons from NAD(P)H:plastoquinone, via FMN and iron-sulfur (Fe-S) centers, to quinones in the photosynthetic chain and possibly in a chloroplast respiratory chain. The immediate electron acceptor for the enzyme in this species is believed to be plastoquinone. Couples the redox reaction to proton translocation, and thus conserves the redox energy in a proton gradient. The protein is NAD(P)H-quinone oxidoreductase subunit 2, chloroplastic of Allium textile (Textile onion).